The chain runs to 331 residues: L-lactate dehydrogenase A chain (331 aa).

NAD(+) contacts are provided by residues 29 to 57 (GMVGMASAISILLKDLCDELAMVDVMEDK) and Arg98. Positions 105, 137, and 168 each coordinate substrate. An NAD(+)-binding site is contributed by Asn137. His192 serves as the catalytic Proton acceptor. Residue Thr247 coordinates substrate.

Belongs to the LDH/MDH superfamily. LDH family. In terms of assembly, homotetramer.

It localises to the cytoplasm. The enzyme catalyses (S)-lactate + NAD(+) = pyruvate + NADH + H(+). Its pathway is fermentation; pyruvate fermentation to lactate; (S)-lactate from pyruvate: step 1/1. Functionally, interconverts simultaneously and stereospecifically pyruvate and lactate with concomitant interconversion of NADH and NAD(+). This chain is L-lactate dehydrogenase A chain (ldha), found in Gobionotothen gibberifrons (Humped rockcod).